The primary structure comprises 534 residues: Chaperonin GroEL, chloroplastic (534 aa).

ATP contacts are provided by residues 29 to 32 (TLGP), 86 to 90 (DGTTT), Gly414, and Asp496.

Belongs to the chaperonin (HSP60) family. As to quaternary structure, forms a cylinder of 14 subunits composed of two heptameric rings stacked back-to-back. Interacts with the co-chaperonin GroES.

It is found in the plastid. The protein resides in the chloroplast. It catalyses the reaction ATP + H2O + a folded polypeptide = ADP + phosphate + an unfolded polypeptide.. In terms of biological role, together with its co-chaperonin GroES, plays an essential role in assisting protein folding. The GroEL-GroES system forms a nano-cage that allows encapsulation of the non-native substrate proteins and provides a physical environment optimized to promote and accelerate protein folding. This is Chaperonin GroEL, chloroplastic from Galdieria sulphuraria (Red alga).